The chain runs to 502 residues: Probable glycine dehydrogenase (decarboxylating) subunit 2 (502 aa).

N6-(pyridoxal phosphate)lysine is present on Lys273.

The protein belongs to the GcvP family. C-terminal subunit subfamily. In terms of assembly, the glycine cleavage system is composed of four proteins: P, T, L and H. In this organism, the P 'protein' is a heterodimer of two subunits. Pyridoxal 5'-phosphate is required as a cofactor.

It catalyses the reaction N(6)-[(R)-lipoyl]-L-lysyl-[glycine-cleavage complex H protein] + glycine + H(+) = N(6)-[(R)-S(8)-aminomethyldihydrolipoyl]-L-lysyl-[glycine-cleavage complex H protein] + CO2. The glycine cleavage system catalyzes the degradation of glycine. The P protein binds the alpha-amino group of glycine through its pyridoxal phosphate cofactor; CO(2) is released and the remaining methylamine moiety is then transferred to the lipoamide cofactor of the H protein. The sequence is that of Probable glycine dehydrogenase (decarboxylating) subunit 2 from Thermococcus onnurineus (strain NA1).